We begin with the raw amino-acid sequence, 720 residues long: Phenylalanine--tRNA ligase beta subunit, chloroplastic (720 aa).

Positions 319–404 constitute a B5 domain; it reads NSTLNIDISL…RVYGYNQFQS (86 aa). Asp382, Asp388, Glu391, and Glu392 together coordinate Mg(2+). The region spanning 626-719 is the FDX-ACB domain; that stretch reads SKYPCITRDL…IIKKLNLEIR (94 aa).

It belongs to the phenylalanyl-tRNA synthetase beta subunit family. Type 1 subfamily. In terms of assembly, tetramer of two alpha and two beta subunits. Mg(2+) is required as a cofactor.

The protein localises to the plastid. It localises to the chloroplast. It catalyses the reaction tRNA(Phe) + L-phenylalanine + ATP = L-phenylalanyl-tRNA(Phe) + AMP + diphosphate + H(+). This is Phenylalanine--tRNA ligase beta subunit, chloroplastic (pheT) from Porphyra purpurea (Red seaweed).